A 130-amino-acid chain; its full sequence is uncharacterized protein (130 aa).

Residues 1–58 are Cytoplasmic-facing; sequence MREQLKLFTREIVDFTFLILSGFDYYQTLLISSNSSKKRPKDSSLLSEKKKKKKKKKK. Positions 34–57 are disordered; it reads NSSKKRPKDSSLLSEKKKKKKKKK. A helical membrane pass occupies residues 59–79; sequence DVLSYLSYLKDLPFVPFLFWQ. Topologically, residues 80–94 are extracellular; sequence PGYSQREKNPRQHSL. Residues 95–115 form a helical membrane-spanning segment; sequence FIMTITKPGMISMADMNYVVS. The Cytoplasmic segment spans residues 116-130; sequence KNRSLNRPAERGGNR.

Its subcellular location is the membrane. This is an uncharacterized protein from Saccharomyces cerevisiae (strain ATCC 204508 / S288c) (Baker's yeast).